The chain runs to 359 residues: Phospho-N-acetylmuramoyl-pentapeptide-transferase (359 aa).

10 consecutive transmembrane segments (helical) span residues 3 to 23 (QILIAVAIALTVSILLTPALI), 55 to 75 (VAIIAGIWAGYLGTHLAGLAF), 80 to 100 (ISASGLLVLSLATVLGIVGFL), 117 to 137 (TAKTIGQVAAAVLFGVLALGF), 156 to 176 (IATVTLAPGLFVLFCVVVVSA), 187 to 207 (LDGLAAGSMAMVTAAYVLITF), 231 to 251 (LAIVAAATAGACIGFLWWNAA), 255 to 275 (IFMGDTGSLALGGIIAGISVT), 280 to 300 (ILAVVLGSLFVAEVSSVVLQI), and 334 to 354 (FWLLTAIACGLGVALFYGEWL).

The protein belongs to the glycosyltransferase 4 family. MraY subfamily. The cofactor is Mg(2+).

The protein localises to the cell membrane. It catalyses the reaction UDP-N-acetyl-alpha-D-muramoyl-L-alanyl-gamma-D-glutamyl-meso-2,6-diaminopimeloyl-D-alanyl-D-alanine + di-trans,octa-cis-undecaprenyl phosphate = di-trans,octa-cis-undecaprenyl diphospho-N-acetyl-alpha-D-muramoyl-L-alanyl-D-glutamyl-meso-2,6-diaminopimeloyl-D-alanyl-D-alanine + UMP. It participates in cell wall biogenesis; peptidoglycan biosynthesis. Its function is as follows. Catalyzes the initial step of the lipid cycle reactions in the biosynthesis of the cell wall peptidoglycan: transfers peptidoglycan precursor phospho-MurNAc-pentapeptide from UDP-MurNAc-pentapeptide onto the lipid carrier undecaprenyl phosphate, yielding undecaprenyl-pyrophosphoryl-MurNAc-pentapeptide, known as lipid I. The polypeptide is Phospho-N-acetylmuramoyl-pentapeptide-transferase (Mycobacterium avium (strain 104)).